A 551-amino-acid chain; its full sequence is Arginine--tRNA ligase (551 aa).

Residues 125–135 (ANPTGPLHIGH) carry the 'HIGH' region motif.

It belongs to the class-I aminoacyl-tRNA synthetase family. As to quaternary structure, monomer.

The protein resides in the cytoplasm. The enzyme catalyses tRNA(Arg) + L-arginine + ATP = L-arginyl-tRNA(Arg) + AMP + diphosphate. This chain is Arginine--tRNA ligase, found in Nitratidesulfovibrio vulgaris (strain DP4) (Desulfovibrio vulgaris).